The sequence spans 130 residues: Small ribosomal subunit protein uS11c (130 aa).

It belongs to the universal ribosomal protein uS11 family. In terms of assembly, part of the 30S ribosomal subunit.

The protein resides in the plastid. It localises to the chloroplast. In Nephroselmis olivacea (Green alga), this protein is Small ribosomal subunit protein uS11c.